The primary structure comprises 92 residues: Large ribosomal subunit protein eL31 (92 aa).

The protein belongs to the eukaryotic ribosomal protein eL31 family.

The chain is Large ribosomal subunit protein eL31 from Haloquadratum walsbyi (strain DSM 16790 / HBSQ001).